We begin with the raw amino-acid sequence, 297 residues long: Phosphoribosylaminoimidazole-succinocarboxamide synthase (297 aa).

It belongs to the SAICAR synthetase family.

It carries out the reaction 5-amino-1-(5-phospho-D-ribosyl)imidazole-4-carboxylate + L-aspartate + ATP = (2S)-2-[5-amino-1-(5-phospho-beta-D-ribosyl)imidazole-4-carboxamido]succinate + ADP + phosphate + 2 H(+). Its pathway is purine metabolism; IMP biosynthesis via de novo pathway; 5-amino-1-(5-phospho-D-ribosyl)imidazole-4-carboxamide from 5-amino-1-(5-phospho-D-ribosyl)imidazole-4-carboxylate: step 1/2. The polypeptide is Phosphoribosylaminoimidazole-succinocarboxamide synthase (Rhodococcus erythropolis (strain PR4 / NBRC 100887)).